The following is a 311-amino-acid chain: MSNYVIQADQQLLDALRAHYQDALSDRLPAGALFAVKRPDVVITAYRSGKVLFQGKAAEQEAGKWMVKRGADPGKRQERETASPPLEHRLEKLSAIGSDEVGTGDYFGPIVVAAAYVDRSHIAKIAALGVKDSKQLTDEAIHKIAPAIMETAPYAVTVLDNAEYNRWQRSGMPQTKMKALLHNRTLAKLVDAIAPIEPEAIIIDQFLERGSYFRCLADETRIVSDRVHCLPKAESVHVAVAAASIIARYVFLEEMERLSRTVGLLLPKGAGAIVDEAAARIIRERGAEALETCAKLHFANTKKALDIAKHR.

One can recognise an RNase H type-2 domain in the interval 93–310; that stretch reads LSAIGSDEVG…TKKALDIAKH (218 aa). 3 residues coordinate a divalent metal cation: Asp-99, Glu-100, and Asp-204.

This sequence belongs to the RNase HII family. RnhC subfamily. Mn(2+) serves as cofactor. The cofactor is Mg(2+).

It localises to the cytoplasm. The catalysed reaction is Endonucleolytic cleavage to 5'-phosphomonoester.. Functionally, endonuclease that specifically degrades the RNA of RNA-DNA hybrids. This chain is Ribonuclease HIII, found in Geobacillus kaustophilus (strain HTA426).